The sequence spans 199 residues: Large ribosomal subunit protein uL4 (199 aa).

It belongs to the universal ribosomal protein uL4 family. As to quaternary structure, part of the 50S ribosomal subunit.

One of the primary rRNA binding proteins, this protein initially binds near the 5'-end of the 23S rRNA. It is important during the early stages of 50S assembly. It makes multiple contacts with different domains of the 23S rRNA in the assembled 50S subunit and ribosome. Functionally, forms part of the polypeptide exit tunnel. This chain is Large ribosomal subunit protein uL4, found in Aquifex aeolicus (strain VF5).